We begin with the raw amino-acid sequence, 625 residues long: Chaperone protein HtpG (625 aa).

An a; substrate-binding region spans residues 1-337 (MSTNQETRGF…TNDLPLNVSR (337 aa)). Residues 338-554 (EILQENKITA…NDEMTTQMAK (217 aa)) form a b region. Residues 555–625 (LFAAMGQKAP…FIKRMNKLLG (71 aa)) are c.

This sequence belongs to the heat shock protein 90 family. Homodimer.

The protein localises to the cytoplasm. Its function is as follows. Molecular chaperone. Has ATPase activity. The protein is Chaperone protein HtpG of Actinobacillus pleuropneumoniae serotype 5b (strain L20).